Consider the following 524-residue polypeptide: Light-independent protochlorophyllide reductase subunit B (524 aa).

Aspartate 36 serves as a coordination point for [4Fe-4S] cluster. Aspartate 290 acts as the Proton donor in catalysis. 425–426 (GL) lines the substrate pocket.

This sequence belongs to the ChlB/BchB/BchZ family. As to quaternary structure, protochlorophyllide reductase is composed of three subunits; ChlL, ChlN and ChlB. Forms a heterotetramer of two ChlB and two ChlN subunits. The cofactor is [4Fe-4S] cluster.

It catalyses the reaction chlorophyllide a + oxidized 2[4Fe-4S]-[ferredoxin] + 2 ADP + 2 phosphate = protochlorophyllide a + reduced 2[4Fe-4S]-[ferredoxin] + 2 ATP + 2 H2O. Its pathway is porphyrin-containing compound metabolism; chlorophyll biosynthesis (light-independent). Component of the dark-operative protochlorophyllide reductase (DPOR) that uses Mg-ATP and reduced ferredoxin to reduce ring D of protochlorophyllide (Pchlide) to form chlorophyllide a (Chlide). This reaction is light-independent. The NB-protein (ChlN-ChlB) is the catalytic component of the complex. The chain is Light-independent protochlorophyllide reductase subunit B from Parasynechococcus marenigrum (strain WH8102).